Here is a 315-residue protein sequence, read N- to C-terminus: Calumenin (315 aa).

A signal peptide spans 1 to 19 (MDTRRLLLCLCLWVACVVS). 6 consecutive EF-hand domains span residues 68 to 103 (ESKE…AQKK), 104 to 139 (YVYD…TYLD), 151 to 186 (QMMV…EEFD), 188 to 223 (MKDI…HDGD), 229 to 264 (WVKT…SDYD), and 265 to 300 (HAEA…FVGS). 9 residues coordinate Ca(2+): aspartate 81, aspartate 83, aspartate 85, tyrosine 87, glutamate 92, aspartate 117, asparagine 119, aspartate 121, and glutamate 128. N-linked (GlcNAc...) asparagine glycosylation occurs at asparagine 131. Positions 164, 166, 168, 175, 201, 203, 205, 212, 242, 244, 246, 248, 253, 278, 280, 282, 284, and 289 each coordinate Ca(2+). The Prevents secretion from ER motif lies at 312-315 (HDEF).

The protein belongs to the CREC family. In terms of assembly, interacts with ggcx.

It localises to the endoplasmic reticulum membrane. The protein resides in the golgi apparatus. The protein localises to the secreted. It is found in the melanosome. Its subcellular location is the sarcoplasmic reticulum lumen. Functionally, involved in regulation of vitamin K-dependent carboxylation of multiple N-terminal glutamate residues. Seems to inhibit gamma-carboxylase ggcx. Binds 7 calcium ions with a low affinity. The polypeptide is Calumenin (calu) (Xenopus tropicalis (Western clawed frog)).